We begin with the raw amino-acid sequence, 110 residues long: uncharacterized protein (110 aa).

This is an uncharacterized protein from Human cytomegalovirus (strain AD169) (HHV-5).